Consider the following 760-residue polypeptide: uncharacterized protein (760 aa).

The first 20 residues, 1–20, serve as a signal peptide directing secretion; sequence MKFKLFLGSSFFGVATLLIA. C21 carries the N-palmitoyl cysteine lipid modification. Residue C21 is the site of S-diacylglycerol cysteine attachment. Disordered stretches follow at residues 221–243, 272–315, and 705–741; these read ENAA…LQLK, AKTN…TSDD, and IKAT…NDKA. A compositionally biased stretch (basic and acidic residues) spans 272 to 284; it reads AKTNGEKGNEKQE. Polar residues predominate over residues 300–312; the sequence is KNTSQDKTQNTQT. Basic and acidic residues predominate over residues 705-721; that stretch reads IKATSKEGEQNQGKKGD.

This sequence belongs to the MG185/MG260 family.

The protein resides in the cell membrane. This is an uncharacterized protein from Mycoplasma pneumoniae (strain ATCC 29342 / M129 / Subtype 1) (Mycoplasmoides pneumoniae).